The sequence spans 350 residues: MLPFRSNIAAMAGYVPGYQPPDVASWIKLNTNENPYPPSPEVVKAILAELGGDGALLRTYPSASSQVLRETVGELFGFDPAWIIMANGSDEVLNNLIRAFAGEGEEIGYVHPSYSYYATLAEIQGARVRTFGLTDDLRIAGFPGRYEGKLFFLTTPNSPLGFAFPLAYIEELATRCAGVLVVDEAYADFADGDALDLVRRHENVVVTRTLSKSYSLAGMRLGFAVARPAVIAALDKIRDHYNLDRLAQAACVASLRDQTYFAGCTRLIRETREWFSAEIRTLGYEVIPSQGNFVFAAPPDRDGKRVYDGLYSRKILVRHFSDPLLAHGMRISIGTREEMEATLAALKEIG.

Position 212 is an N6-(pyridoxal phosphate)lysine (Lys212).

The protein belongs to the class-II pyridoxal-phosphate-dependent aminotransferase family. Histidinol-phosphate aminotransferase subfamily. In terms of assembly, homodimer. Requires pyridoxal 5'-phosphate as cofactor.

It catalyses the reaction L-histidinol phosphate + 2-oxoglutarate = 3-(imidazol-4-yl)-2-oxopropyl phosphate + L-glutamate. Its pathway is amino-acid biosynthesis; L-histidine biosynthesis; L-histidine from 5-phospho-alpha-D-ribose 1-diphosphate: step 7/9. The polypeptide is Histidinol-phosphate aminotransferase (Geobacter sulfurreducens (strain ATCC 51573 / DSM 12127 / PCA)).